A 481-amino-acid chain; its full sequence is Flavonol 3-O-glucosyltransferase UGT71C1 (481 aa).

The active-site Proton acceptor is the H19. H19 contacts an anthocyanidin. Catalysis depends on D131, which acts as the Charge relay. Positions 153, 352, 354, 369, 372, 373, 374, and 377 each coordinate UDP-alpha-D-glucose. A392 lines the an anthocyanidin pocket. Positions 393 and 394 each coordinate UDP-alpha-D-glucose.

It belongs to the UDP-glycosyltransferase family.

The enzyme catalyses a flavonol + UDP-alpha-D-glucose = a flavonol 3-O-beta-D-glucoside + UDP + H(+). The catalysed reaction is a 7-O-hydroxy-flavonol + UDP-alpha-D-glucose = a flavonol 7-O-beta-D-glucoside + UDP + H(+). In terms of biological role, possesses quercetin 7-O-glucosyltransferase and 3'-O-glucosyltransferase activities in vitro. Also active in vitro on benzoates and benzoate derivatives. Glucosylates other secondary metabolites in vitro like trans-resveratrol, curcumin, vanillin and etoposide. This chain is Flavonol 3-O-glucosyltransferase UGT71C1, found in Arabidopsis thaliana (Mouse-ear cress).